A 131-amino-acid chain; its full sequence is Phosphomevalonate dehydratase small subunit (131 aa).

S62 functions as the Proton acceptor in the catalytic mechanism.

This sequence belongs to the AcnX type II small subunit family. In terms of assembly, heterodimer composed of a large subunit (PMDh-L) and a small subunit (PMDh-S).

The enzyme catalyses (R)-5-phosphomevalonate = (2E)-3-methyl-5-phosphooxypent-2-enoate + H2O. It participates in isoprenoid biosynthesis; isopentenyl diphosphate biosynthesis via mevalonate pathway. Component of a hydro-lyase that catalyzes the dehydration of mevalonate 5-phosphate (MVA5P) to form trans-anhydromevalonate 5-phosphate (tAHMP). Involved in the archaeal mevalonate (MVA) pathway, which provides fundamental precursors for isoprenoid biosynthesis, such as isopentenyl diphosphate (IPP) and dimethylallyl diphosphate (DMAPP). This is Phosphomevalonate dehydratase small subunit from Methanothermobacter thermautotrophicus (strain ATCC 29096 / DSM 1053 / JCM 10044 / NBRC 100330 / Delta H) (Methanobacterium thermoautotrophicum).